Reading from the N-terminus, the 122-residue chain is Large ribosomal subunit protein uL14 (122 aa).

This sequence belongs to the universal ribosomal protein uL14 family. In terms of assembly, part of the 50S ribosomal subunit. Forms a cluster with proteins L3 and L19. In the 70S ribosome, L14 and L19 interact and together make contacts with the 16S rRNA in bridges B5 and B8.

Its function is as follows. Binds to 23S rRNA. Forms part of two intersubunit bridges in the 70S ribosome. The chain is Large ribosomal subunit protein uL14 from Gloeothece citriformis (strain PCC 7424) (Cyanothece sp. (strain PCC 7424)).